The primary structure comprises 1887 residues: Nuclear pore membrane glycoprotein 210 (1887 aa).

An N-terminal signal peptide occupies residues 1–26; it reads MAARGRGLLLLTLSVLLAAGPSAAAA. The Perinuclear space segment spans residues 27–1808; sequence KLNIPKVLLP…LFQHFLDSYQ (1782 aa). 12 N-linked (GlcNAc...) asparagine glycosylation sites follow: asparagine 44, asparagine 337, asparagine 405, asparagine 484, asparagine 681, asparagine 801, asparagine 926, asparagine 1039, asparagine 1116, asparagine 1135, asparagine 1362, and asparagine 1441. The region spanning 1078 to 1151 is the BIG2 domain; sequence FPPFRLMPRK…VQAVDAETGK (74 aa). Residues 1809 to 1829 traverse the membrane as a helical segment; the sequence is VMFFTLFALLAGTAVMIIAYH. Residues 1830–1887 lie on the Cytoplasmic side of the membrane; sequence TVCTPRDLAVPAALTPRASPGHSPHYFAASSPTSPNALPPARKASPPSGLWSPAYASH. Threonine 1844 carries the phosphothreonine modification. The tract at residues 1853–1887 is disordered; it reads PHYFAASSPTSPNALPPARKASPPSGLWSPAYASH. Residues serine 1874, serine 1877, serine 1881, and serine 1886 each carry the phosphoserine modification.

This sequence belongs to the NUP210 family. In terms of assembly, forms dimers and possibly higher-order oligomers. Post-translationally, N-glycosylated, but not all potential glycosylation sites may be used. Contains high-mannose type oligosaccharides. In terms of processing, phosphorylated at Ser-1881 in mitosis specifically; not phosphorylated in interphase. As to expression, ubiquitous expression, with highest levels in lung, liver, pancreas, testis, and ovary, intermediate levels in brain, kidney, and spleen, and lowest levels in heart and skeletal muscle.

The protein resides in the nucleus. Its subcellular location is the nuclear pore complex. It localises to the nucleus membrane. It is found in the endoplasmic reticulum membrane. In terms of biological role, nucleoporin essential for nuclear pore assembly and fusion, nuclear pore spacing, as well as structural integrity. This is Nuclear pore membrane glycoprotein 210 (NUP210) from Homo sapiens (Human).